We begin with the raw amino-acid sequence, 236 residues long: Probable transcriptional regulatory protein FP0835 (236 aa).

The protein belongs to the TACO1 family.

Its subcellular location is the cytoplasm. This Flavobacterium psychrophilum (strain ATCC 49511 / DSM 21280 / CIP 103535 / JIP02/86) protein is Probable transcriptional regulatory protein FP0835.